We begin with the raw amino-acid sequence, 274 residues long: MQEYLNFLKYIKENGVLKGDRTGTGTRSIFGYQMRFDLQKGFPLVTTKKIHIPSVVHELLWFLSGSTNIKYLNDNNVRIWNEWATVDGELGPIYGKQWRDFNGQGIDQIADVIQMLKTNPNSRRILVSAWNPCVVPSEKISPQENVVKGNSALPPCHAMFQFYVANNKLSCMLTQRSADAFLGVPFNIASYSLLTNMVAQQCNLDVGEFIWSGGDCHIYNNHIEQVNEQLSREPLALPTLKILRKPNSIFDYKYEDFEFENYNHHPAIKAKISV.

Arg-21 contacts dUMP. Residue His-51 participates in (6R)-5,10-methylene-5,6,7,8-tetrahydrofolate binding. 123–124 (RR) serves as a coordination point for dUMP. The active-site Nucleophile is the Cys-156. DUMP-binding positions include 176–179 (RSAD), Asn-187, and 217–219 (HIY). A (6R)-5,10-methylene-5,6,7,8-tetrahydrofolate-binding site is contributed by Asp-179. Ser-273 serves as a coordination point for (6R)-5,10-methylene-5,6,7,8-tetrahydrofolate.

The protein belongs to the thymidylate synthase family. Bacterial-type ThyA subfamily. Homodimer.

It is found in the cytoplasm. It catalyses the reaction dUMP + (6R)-5,10-methylene-5,6,7,8-tetrahydrofolate = 7,8-dihydrofolate + dTMP. The protein operates within pyrimidine metabolism; dTTP biosynthesis. Functionally, catalyzes the reductive methylation of 2'-deoxyuridine-5'-monophosphate (dUMP) to 2'-deoxythymidine-5'-monophosphate (dTMP) while utilizing 5,10-methylenetetrahydrofolate (mTHF) as the methyl donor and reductant in the reaction, yielding dihydrofolate (DHF) as a by-product. This enzymatic reaction provides an intracellular de novo source of dTMP, an essential precursor for DNA biosynthesis. The polypeptide is Thymidylate synthase (Francisella tularensis subsp. tularensis (strain SCHU S4 / Schu 4)).